The sequence spans 393 residues: MTAPTTRKDLMIVNMGPQHPSMHGVLRLIVTLDGEDVVDCEPILGYLHRGMEKIAENRTIIQYLPYVTRWDYLATMFTEAITINGPEQLGNIQVPKRASYIRVIMLELSRIASHLLWLGPFMADIGAQTPFFYIFRERELIYDLFEAATGMRMMHNYFRIGGVAADLPYGWIDKCLDFCDYFLTGVAEYQKLITRNPIFLERVEGVGIIGRDEALNWGLSGPMLRASGIEWDLRKVDHYESYDEFDWQVQWQREGDSLARYLVRIGEMTESIKIIQQALEGIPGGPYENLEMRRFDRLKDPEWNDFEYRFISKKPSPTFELSKQELYVRVEAPKGELGIFLIGDQSVFPWRWKIRPPGFINLQILPQLVKRMKLADIMTILGSIDIIMGEVDR.

This sequence belongs to the complex I 49 kDa subunit family. As to quaternary structure, NDH is composed of at least 16 different subunits, 5 of which are encoded in the nucleus.

The protein resides in the plastid. Its subcellular location is the chloroplast thylakoid membrane. It catalyses the reaction a plastoquinone + NADH + (n+1) H(+)(in) = a plastoquinol + NAD(+) + n H(+)(out). The enzyme catalyses a plastoquinone + NADPH + (n+1) H(+)(in) = a plastoquinol + NADP(+) + n H(+)(out). In terms of biological role, NDH shuttles electrons from NAD(P)H:plastoquinone, via FMN and iron-sulfur (Fe-S) centers, to quinones in the photosynthetic chain and possibly in a chloroplast respiratory chain. The immediate electron acceptor for the enzyme in this species is believed to be plastoquinone. Couples the redox reaction to proton translocation, and thus conserves the redox energy in a proton gradient. The polypeptide is NAD(P)H-quinone oxidoreductase subunit H, chloroplastic (Solanum lycopersicum (Tomato)).